We begin with the raw amino-acid sequence, 392 residues long: 23S rRNA (uracil(747)-C(5))-methyltransferase RlmC (392 aa).

4 residues coordinate [4Fe-4S] cluster: Cys4, Cys12, Cys15, and Cys93. Residues Gln218, Phe247, Glu275, and Asn321 each contribute to the S-adenosyl-L-methionine site. The active-site Nucleophile is Cys348.

Belongs to the class I-like SAM-binding methyltransferase superfamily. RNA M5U methyltransferase family. RlmC subfamily.

The enzyme catalyses uridine(747) in 23S rRNA + S-adenosyl-L-methionine = 5-methyluridine(747) in 23S rRNA + S-adenosyl-L-homocysteine + H(+). Its function is as follows. Catalyzes the formation of 5-methyl-uridine at position 747 (m5U747) in 23S rRNA. This Haemophilus influenzae (strain PittGG) protein is 23S rRNA (uracil(747)-C(5))-methyltransferase RlmC.